The primary structure comprises 128 residues: Small ribosomal subunit protein uS11 (128 aa).

Belongs to the universal ribosomal protein uS11 family. In terms of assembly, part of the 30S ribosomal subunit. Interacts with proteins S7 and S18. Binds to IF-3.

Located on the platform of the 30S subunit, it bridges several disparate RNA helices of the 16S rRNA. Forms part of the Shine-Dalgarno cleft in the 70S ribosome. The protein is Small ribosomal subunit protein uS11 of Vesicomyosocius okutanii subsp. Calyptogena okutanii (strain HA).